An 838-amino-acid polypeptide reads, in one-letter code: Rab effector MyRIP (838 aa).

The RabBD domain occupies 4–124; it reads KLDLSGLSNN…TQSLEWFYNN (121 aa). Residues 58–112 form an FYVE-type zinc finger; it reads KFNEHCCIRCCSPFTFLLNPKRQCLDCHYNICKSCCSYSQSERGYICAACQKSRH. Residues 188–237 adopt a coiled-coil conformation; that stretch reads ADTLTVALRVAEEAIEEAIAKAENYKDSLEKQNEARYLHEHKEELIEELA. Polar residues-rich tracts occupy residues 263-290 and 451-484; these read QNQK…TSQP and TFTQ…SPST. Disordered stretches follow at residues 263 to 331, 444 to 501, 525 to 570, and 681 to 838; these read QNQK…TEVE, SQHD…ETHL, NFNP…LYSA, and ERDV…EKRN. Basic and acidic residues-rich tracts occupy residues 697–736 and 753–838; these read NKQE…ERQT and RQMK…EKRN. Positions 714–833 form a coiled coil; sequence KERRESKRES…DLEKKRKSIR (120 aa).

As to quaternary structure, interacts with prkar2aa.

It is found in the cytoplasm. The protein resides in the perinuclear region. The protein localises to the cytoplasmic vesicle. Its subcellular location is the secretory vesicle. May link secretory vesicles to actin filaments. May function as a protein kinase A-anchoring protein (AKAP). May act as a scaffolding protein that links PKA to components of the exocytosis machinery, thus facilitating exocytosis. This is Rab effector MyRIP (myrip) from Danio rerio (Zebrafish).